The chain runs to 202 residues: Adenylate kinase (202 aa).

Gly-12–Thr-20 contacts ATP.

This sequence belongs to the archaeal adenylate kinase family.

The protein localises to the cytoplasm. It catalyses the reaction AMP + ATP = 2 ADP. This Aeropyrum pernix (strain ATCC 700893 / DSM 11879 / JCM 9820 / NBRC 100138 / K1) protein is Adenylate kinase (adkA).